Reading from the N-terminus, the 475-residue chain is Aspartyl/glutamyl-tRNA(Asn/Gln) amidotransferase subunit B (475 aa).

It belongs to the GatB/GatE family. GatB subfamily. In terms of assembly, heterotrimer of A, B and C subunits.

It carries out the reaction L-glutamyl-tRNA(Gln) + L-glutamine + ATP + H2O = L-glutaminyl-tRNA(Gln) + L-glutamate + ADP + phosphate + H(+). The catalysed reaction is L-aspartyl-tRNA(Asn) + L-glutamine + ATP + H2O = L-asparaginyl-tRNA(Asn) + L-glutamate + ADP + phosphate + 2 H(+). In terms of biological role, allows the formation of correctly charged Asn-tRNA(Asn) or Gln-tRNA(Gln) through the transamidation of misacylated Asp-tRNA(Asn) or Glu-tRNA(Gln) in organisms which lack either or both of asparaginyl-tRNA or glutaminyl-tRNA synthetases. The reaction takes place in the presence of glutamine and ATP through an activated phospho-Asp-tRNA(Asn) or phospho-Glu-tRNA(Gln). This Caldanaerobacter subterraneus subsp. tengcongensis (strain DSM 15242 / JCM 11007 / NBRC 100824 / MB4) (Thermoanaerobacter tengcongensis) protein is Aspartyl/glutamyl-tRNA(Asn/Gln) amidotransferase subunit B.